The sequence spans 476 residues: Growth/differentiation factor 10 (476 aa).

Positions 1–29 (MAPGPARISLGSQLLPMVPLLLLLRGAGC) are cleaved as a signal peptide. The propeptide occupies 30 to 366 (GHRGPSWSSL…EKTMQKARRR (337 aa)). A disordered region spans residues 39–63 (LPSAAAGLQGDRDSQQSPGDAAAAL). Asn114, Asn152, and Asn277 each carry an N-linked (GlcNAc...) asparagine glycan. The segment at 268-301 (GDFEPGAAPNSSADPRVRRAAQVSKPLQDNELPG) is disordered. Intrachain disulfides connect Cys374–Cys441, Cys403–Cys473, and Cys407–Cys475. Asn467 carries N-linked (GlcNAc...) asparagine glycosylation.

This sequence belongs to the TGF-beta family. Homodimer or heterodimer. Can form a non-covalent complex of the mature region and the pro-region. Highly expressed in epididymal adipose tissue, brain, bone and aorta and to a lesser extent in liver and spleen. Expressed at higher levels in preadipocytes than in mature adipocytes. Strongly expressed in glial cells of the cerebellum.

It is found in the secreted. Its function is as follows. Growth factor involved in osteogenesis and adipogenesis. Plays an inhibitory role in the process of osteoblast differentiation via SMAD2/3 pathway. Plays an inhibitory role in the process of adipogenesis. In Mus musculus (Mouse), this protein is Growth/differentiation factor 10.